Here is a 320-residue protein sequence, read N- to C-terminus: Methyltransferase gedG (320 aa).

A methyltransferase domain region spans residues 61–154 (DAGAGNGVYS…QLRPGGTFAC (94 aa)). Positions 231–252 (GLLPPERRGEVTEPDHEGPHDQ) are disordered. Positions 235 to 252 (PERRGEVTEPDHEGPHDQ) are enriched in basic and acidic residues.

This sequence belongs to the methyltransferase superfamily.

Its pathway is secondary metabolite biosynthesis. Methyltransferase; part of the gene cluster that mediates the biosynthesis of geodin, an intermediate in the biosynthesis of other natural products. The pathway begins with the synthesis of atrochrysone thioester by the polyketide synthase (PKS) gedC. The atrochrysone carboxyl ACP thioesterase gedB then breaks the thioester bond and releases the atrochrysone carboxylic acid from gedC. The atrochrysone carboxylic acid is then converted to atrochrysone which is further transformed into emodinanthrone. The next step is performed by the emodinanthrone oxygenase gedH that catalyzes the oxidation of emodinanthrone to emodin. Emodin O-methyltransferase encoded probably by gedA then catalyzes methylation of the 8-hydroxy group of emodin to form questin. Ring cleavage of questin by questin oxidase gedK leads to desmethylsulochrin via several intermediates including questin epoxide. Another methylation step probably catalyzed by methyltransferase gedG leads to the formation of sulochrin which is further converted to dihydrogeodin by the sulochrin halogenase gedL. Finally, the dihydrogeodin oxidase gedJ catalyzes the stereospecific phenol oxidative coupling reaction converting dihydrogeodin to geodin. In Aspergillus terreus (strain NIH 2624 / FGSC A1156), this protein is Methyltransferase gedG.